A 541-amino-acid chain; its full sequence is Malate synthase (541 aa).

The Proton acceptor role is filled by Arg169. The active-site Proton donor is Asp454.

It belongs to the malate synthase family.

It localises to the cytoplasm. It carries out the reaction glyoxylate + acetyl-CoA + H2O = (S)-malate + CoA + H(+). It participates in carbohydrate metabolism; glyoxylate cycle; (S)-malate from isocitrate: step 2/2. This chain is Malate synthase (aceB), found in Streptomyces clavuligerus.